Consider the following 425-residue polypeptide: Enolase (425 aa).

Gln-162 contributes to the (2R)-2-phosphoglycerate binding site. The active-site Proton donor is Glu-204. Mg(2+)-binding residues include Asp-241, Glu-284, and Asp-311. Lys-336, Arg-365, Ser-366, and Lys-387 together coordinate (2R)-2-phosphoglycerate. The Proton acceptor role is filled by Lys-336.

Belongs to the enolase family. It depends on Mg(2+) as a cofactor.

The protein localises to the cytoplasm. Its subcellular location is the secreted. The protein resides in the cell surface. It carries out the reaction (2R)-2-phosphoglycerate = phosphoenolpyruvate + H2O. It functions in the pathway carbohydrate degradation; glycolysis; pyruvate from D-glyceraldehyde 3-phosphate: step 4/5. Its function is as follows. Catalyzes the reversible conversion of 2-phosphoglycerate (2-PG) into phosphoenolpyruvate (PEP). It is essential for the degradation of carbohydrates via glycolysis. This chain is Enolase, found in Brucella ovis (strain ATCC 25840 / 63/290 / NCTC 10512).